The sequence spans 278 residues: 4-deoxy-L-threo-5-hexosulose-uronate ketol-isomerase (278 aa).

Zn(2+) contacts are provided by H196, H198, E203, and H245.

The protein belongs to the KduI family. Homohexamer. The cofactor is Zn(2+).

The catalysed reaction is 5-dehydro-4-deoxy-D-glucuronate = 3-deoxy-D-glycero-2,5-hexodiulosonate. It participates in glycan metabolism; pectin degradation; 2-dehydro-3-deoxy-D-gluconate from pectin: step 4/5. Catalyzes the isomerization of 5-dehydro-4-deoxy-D-glucuronate to 3-deoxy-D-glycero-2,5-hexodiulosonate. The sequence is that of 4-deoxy-L-threo-5-hexosulose-uronate ketol-isomerase from Escherichia coli O139:H28 (strain E24377A / ETEC).